The following is a 326-amino-acid chain: MCPLTLHVTGLMNVSEPNSSFAFVNEFILQGFSCEWTIQIFLFSLFTTIYALTITGNGAIAFVLWCDRRLHTPMYMFLGNFSFLEIWYVSSTVPKMLVNFLSEKKNISFAGCFLQFYFFFSLGTSECLLLTVMAFDQYLAICRPLLYPNIMTGHLYAKLVILCWVCGFLWFLIPIVLISQKPFCGPNIIDHVVCDPGPLFALDCVSAPRIQLFCYTLSSLVIFGNFLFIIGSYTLVLKAVLGMPSSTGRHKAFSTCGSHLAVVSLCYSPLMVMYVSPGLGHSTGMQKIETLFYAMVTPLFNPLIYSLQNKEIKAALRKVLGSSNII.

At 1–44 (MCPLTLHVTGLMNVSEPNSSFAFVNEFILQGFSCEWTIQIFLFS) the chain is on the extracellular side. Residues asparagine 13 and asparagine 18 are each glycosylated (N-linked (GlcNAc...) asparagine). The chain crosses the membrane as a helical span at residues 45-65 (LFTTIYALTITGNGAIAFVLW). Residues 66–72 (CDRRLHT) are Cytoplasmic-facing. Residues 73–93 (PMYMFLGNFSFLEIWYVSSTV) traverse the membrane as a helical segment. At 94–112 (PKMLVNFLSEKKNISFAGC) the chain is on the extracellular side. N-linked (GlcNAc...) asparagine glycosylation occurs at asparagine 106. Cysteine 112 and cysteine 194 are disulfide-bonded. Residues 113 to 133 (FLQFYFFFSLGTSECLLLTVM) form a helical membrane-spanning segment. The Cytoplasmic portion of the chain corresponds to 134–158 (AFDQYLAICRPLLYPNIMTGHLYAK). Residues 159–179 (LVILCWVCGFLWFLIPIVLIS) traverse the membrane as a helical segment. Residues 180 to 216 (QKPFCGPNIIDHVVCDPGPLFALDCVSAPRIQLFCYT) are Extracellular-facing. Residues 217-237 (LSSLVIFGNFLFIIGSYTLVL) form a helical membrane-spanning segment. Residues 238 to 259 (KAVLGMPSSTGRHKAFSTCGSH) lie on the Cytoplasmic side of the membrane. A helical membrane pass occupies residues 260–280 (LAVVSLCYSPLMVMYVSPGLG). At 281-287 (HSTGMQK) the chain is on the extracellular side. Residues 288-308 (IETLFYAMVTPLFNPLIYSLQ) traverse the membrane as a helical segment. At 309–326 (NKEIKAALRKVLGSSNII) the chain is on the cytoplasmic side.

The protein belongs to the G-protein coupled receptor 1 family.

The protein resides in the cell membrane. Odorant receptor. This chain is Olfactory receptor 11H2 (OR11H2), found in Homo sapiens (Human).